We begin with the raw amino-acid sequence, 404 residues long: MKLPIYLDYSATTPVDPRVAEKMMQFLTMDGTFGNPASRSHRFGWQAEEAVDIARNQIAELVGADPREIVFTSGATESDNLAIKGAANFYQKKGKHIITSKTEHKAVLDTCRQLEREGFEVTYLAPQSNGIIDLKELEAAMRDDTILVSIMHVNNEIGVVQDIATIGEMCRARGIIYHVDATQSVGKLPIDLSQLKVDLMSFSGHKIYGPKGIGALYVRRKPRIRIEAQIHGGGHERGMRSGTLPVHQIVGMGEAYRIAKEEMESEMARLRTLRNRLWNGVKDMEEVYLNGDLEQGAPNILNVSFNYVEGESLIMALKDLAVSSGSACTSASLEPSYVLRALGMTDELAHSSIRFSLGRFTTEEEIDYAIDLIRKSIGRLRELSPLWEMFKQGVDLNSIEWSHH.

Residues 75–76 (AT), N155, Q183, and 203–205 (SGH) each bind pyridoxal 5'-phosphate. N6-(pyridoxal phosphate)lysine is present on K206. Position 243 (T243) interacts with pyridoxal 5'-phosphate. The Cysteine persulfide intermediate role is filled by C328. [2Fe-2S] cluster is bound at residue C328.

The protein belongs to the class-V pyridoxal-phosphate-dependent aminotransferase family. NifS/IscS subfamily. Homodimer. Forms a heterotetramer with IscU, interacts with other sulfur acceptors. Requires pyridoxal 5'-phosphate as cofactor.

The protein localises to the cytoplasm. It carries out the reaction (sulfur carrier)-H + L-cysteine = (sulfur carrier)-SH + L-alanine. It participates in cofactor biosynthesis; iron-sulfur cluster biosynthesis. Functionally, master enzyme that delivers sulfur to a number of partners involved in Fe-S cluster assembly, tRNA modification or cofactor biosynthesis. Catalyzes the removal of elemental sulfur atoms from cysteine to produce alanine. Functions as a sulfur delivery protein for Fe-S cluster synthesis onto IscU, an Fe-S scaffold assembly protein, as well as other S acceptor proteins. The sequence is that of Cysteine desulfurase IscS from Klebsiella pneumoniae subsp. pneumoniae (strain ATCC 700721 / MGH 78578).